The primary structure comprises 258 residues: Neurotrophin-3 (258 aa).

The N-terminal stretch at 1-18 (MSILFYVIFLAYLRGIQG) is a signal peptide. A propeptide spanning residues 19–139 (NSMDQRSLPE…ANRTSPRRKR (121 aa)) is cleaved from the precursor. The interval 60 to 85 (QSTLPKAEAPREPEQGEATRSEFQPM) is disordered. Residues 67–79 (EAPREPEQGEATR) are compositionally biased toward basic and acidic residues. A glycan (N-linked (GlcNAc...) asparagine) is linked at N131. Intrachain disulfides connect C153/C218, C196/C247, and C206/C249.

This sequence belongs to the NGF-beta family. Brain and peripheral tissues.

It localises to the secreted. Seems to promote the survival of visceral and proprioceptive sensory neurons. This chain is Neurotrophin-3 (Ntf3), found in Mus musculus (Mouse).